The chain runs to 84 residues: MSKKSTSAALPSSFEEAMAELEQLVARMEAGELPLEASVAAYKRGSELVKYCAAQLEKVDNQVKVLEGDMLKPFNADRAIEADE.

This sequence belongs to the XseB family. Heterooligomer composed of large and small subunits.

The protein resides in the cytoplasm. It catalyses the reaction Exonucleolytic cleavage in either 5'- to 3'- or 3'- to 5'-direction to yield nucleoside 5'-phosphates.. In terms of biological role, bidirectionally degrades single-stranded DNA into large acid-insoluble oligonucleotides, which are then degraded further into small acid-soluble oligonucleotides. This is Exodeoxyribonuclease 7 small subunit from Janthinobacterium sp. (strain Marseille) (Minibacterium massiliensis).